Consider the following 240-residue polypeptide: Citrate synthase-lysine N-methyltransferase CSKMT, mitochondrial (240 aa).

Residues 1 to 28 constitute a mitochondrion transit peptide; that stretch reads MAALRRMLHLPSLMMGTCRPFAGSLADS.

It belongs to the methyltransferase superfamily.

It is found in the mitochondrion. The catalysed reaction is L-lysyl-[citrate synthase] + S-adenosyl-L-methionine = N(6)-methyl-L-lysyl-[citrate synthase] + S-adenosyl-L-homocysteine + H(+). It catalyses the reaction N(6)-methyl-L-lysyl-[citrate synthase] + S-adenosyl-L-methionine = N(6),N(6)-dimethyl-L-lysyl-[citrate synthase] + S-adenosyl-L-homocysteine + H(+). It carries out the reaction N(6),N(6)-dimethyl-L-lysyl-[citrate synthase] + S-adenosyl-L-methionine = N(6),N(6),N(6)-trimethyl-L-lysyl-[citrate synthase] + S-adenosyl-L-homocysteine + H(+). Citrate synthase-lysine methyltransferase activity is inhibited by S-adenosylhomocysteine (AdoHcy) and oxaloacetate (OAA). In terms of biological role, protein-lysine methyltransferase that selectively trimethylates citrate synthase (CS) in mitochondria. Seems to conduct trimethylation in a highly distributive manner rather than in a processive manner, and thus introduces a single methyl group per binding event. The sequence is that of Citrate synthase-lysine N-methyltransferase CSKMT, mitochondrial from Homo sapiens (Human).